A 224-amino-acid polypeptide reads, in one-letter code: UPF0758 protein Psyr_0222 (224 aa).

Residues 102–224 (ALENPTQVRS…PLSMVERGLM (123 aa)) enclose the MPN domain. Zn(2+) contacts are provided by His173, His175, and Asp186. Positions 173–186 (HNHPSGITTPSRSD) match the JAMM motif motif.

It belongs to the UPF0758 family.

The polypeptide is UPF0758 protein Psyr_0222 (Pseudomonas syringae pv. syringae (strain B728a)).